A 137-amino-acid chain; its full sequence is MVSHKPSKQRLLLYNLPKHQRHKLLTAKLSKELQQQYGIKRLAIRKGDTVKVMRGDKDVLNFEGKVVEVNRKTGRIAIEGLTRKKADGTPVYRWIHASKVIITKLDLSDAKRKEIIERKRKAREEYLKKKEQTTEAK.

This sequence belongs to the universal ribosomal protein uL24 family. As to quaternary structure, part of the 50S ribosomal subunit.

One of two assembly initiator proteins, it binds directly to the 5'-end of the 23S rRNA, where it nucleates assembly of the 50S subunit. Functionally, located at the polypeptide exit tunnel on the outside of the subunit. This chain is Large ribosomal subunit protein uL24, found in Sulfurisphaera tokodaii (strain DSM 16993 / JCM 10545 / NBRC 100140 / 7) (Sulfolobus tokodaii).